Consider the following 184-residue polypeptide: ATP synthase subunit b, chloroplastic (184 aa).

Residues 27 to 49 (LATNLINLSVVLGVLIFFGKGVL) traverse the membrane as a helical segment.

This sequence belongs to the ATPase B chain family. As to quaternary structure, F-type ATPases have 2 components, F(1) - the catalytic core - and F(0) - the membrane proton channel. F(1) has five subunits: alpha(3), beta(3), gamma(1), delta(1), epsilon(1). F(0) has four main subunits: a(1), b(1), b'(1) and c(10-14). The alpha and beta chains form an alternating ring which encloses part of the gamma chain. F(1) is attached to F(0) by a central stalk formed by the gamma and epsilon chains, while a peripheral stalk is formed by the delta, b and b' chains.

Its subcellular location is the plastid. The protein localises to the chloroplast thylakoid membrane. Functionally, f(1)F(0) ATP synthase produces ATP from ADP in the presence of a proton or sodium gradient. F-type ATPases consist of two structural domains, F(1) containing the extramembraneous catalytic core and F(0) containing the membrane proton channel, linked together by a central stalk and a peripheral stalk. During catalysis, ATP synthesis in the catalytic domain of F(1) is coupled via a rotary mechanism of the central stalk subunits to proton translocation. Component of the F(0) channel, it forms part of the peripheral stalk, linking F(1) to F(0). This is ATP synthase subunit b, chloroplastic from Liriodendron tulipifera (Tuliptree).